Consider the following 338-residue polypeptide: Anthranilate phosphoribosyltransferase (338 aa).

5-phospho-alpha-D-ribose 1-diphosphate contacts are provided by residues G78, 81-82, S86, 88-91, 106-114, and S118; these read GD, NIST, and KHGNKSITS. G78 provides a ligand contact to anthranilate. A Mg(2+)-binding site is contributed by S90. An anthranilate-binding site is contributed by N109. R163 contributes to the anthranilate binding site. 2 residues coordinate Mg(2+): D222 and E223.

It belongs to the anthranilate phosphoribosyltransferase family. Homodimer. It depends on Mg(2+) as a cofactor.

The enzyme catalyses N-(5-phospho-beta-D-ribosyl)anthranilate + diphosphate = 5-phospho-alpha-D-ribose 1-diphosphate + anthranilate. Its pathway is amino-acid biosynthesis; L-tryptophan biosynthesis; L-tryptophan from chorismate: step 2/5. Catalyzes the transfer of the phosphoribosyl group of 5-phosphorylribose-1-pyrophosphate (PRPP) to anthranilate to yield N-(5'-phosphoribosyl)-anthranilate (PRA). The chain is Anthranilate phosphoribosyltransferase from Staphylococcus carnosus (strain TM300).